The chain runs to 218 residues: Nuclear cap-binding protein subunit 2 (218 aa).

MRNA is bound by residues tyrosine 24, tyrosine 49, 118 to 122 (TIDLD), 129 to 133 (RQFGR), and 139 to 140 (QV). An RRM domain is found at 46–124 (ATIYVGNLSF…REITIDLDPG (79 aa)). Basic residues predominate over residues 176–194 (DPHKNHHHHHHGHHHHHGQ). The interval 176-200 (DPHKNHHHHHHGHHHHHGQPHAAAA) is disordered.

This sequence belongs to the RRM NCBP2 family. In terms of assembly, component of the nuclear cap-binding complex (CBC).

The protein resides in the nucleus. Functionally, component of the cap-binding complex (CBC) involved in the nuclear export of capped U snRNAs. The CBC complex is required for efficient pre-mRNA splicing through efficient commitment complex and spliceosome formation; and involved in rRNA processing at sites A0, A1 and A2. The chain is Nuclear cap-binding protein subunit 2 (CBC2) from Eremothecium gossypii (strain ATCC 10895 / CBS 109.51 / FGSC 9923 / NRRL Y-1056) (Yeast).